A 129-amino-acid chain; its full sequence is UPF0325 protein HCH_00487 (129 aa).

This sequence belongs to the UPF0325 family.

This chain is UPF0325 protein HCH_00487, found in Hahella chejuensis (strain KCTC 2396).